The chain runs to 344 residues: Tetraacyldisaccharide 4'-kinase (344 aa).

ATP is bound at residue 65–72 (HAGGTGKT).

The protein belongs to the LpxK family.

The enzyme catalyses a lipid A disaccharide + ATP = a lipid IVA + ADP + H(+). Its pathway is glycolipid biosynthesis; lipid IV(A) biosynthesis; lipid IV(A) from (3R)-3-hydroxytetradecanoyl-[acyl-carrier-protein] and UDP-N-acetyl-alpha-D-glucosamine: step 6/6. In terms of biological role, transfers the gamma-phosphate of ATP to the 4'-position of a tetraacyldisaccharide 1-phosphate intermediate (termed DS-1-P) to form tetraacyldisaccharide 1,4'-bis-phosphate (lipid IVA). This Neisseria meningitidis serogroup C / serotype 2a (strain ATCC 700532 / DSM 15464 / FAM18) protein is Tetraacyldisaccharide 4'-kinase.